The sequence spans 78 residues: MIIPWQQLDPETLDSIIESFVLREGTDYGEQERSLAQKVEDIRSQLQSGEVVLVWSELHETLNIMPRSQLNAGGHAPY.

This sequence belongs to the UPF0270 family.

The chain is UPF0270 protein ECA4061 from Pectobacterium atrosepticum (strain SCRI 1043 / ATCC BAA-672) (Erwinia carotovora subsp. atroseptica).